We begin with the raw amino-acid sequence, 235 residues long: Centromere protein H (235 aa).

Positions 1–23 (MAGRLSESVGSGPGAEAETAADP) are disordered. Residues 125–145 (EIIQAHQQARVIRENLNDIRR) are a coiled coil.

It belongs to the CENP-H/MCM16 family. Component of the CENPA-HI complex, at least composed of CENPH, CENPI, CENPK, CENPL, CENPM, CENPO and CENPP. Interacts with NDC80.

It localises to the nucleus. The protein localises to the chromosome. Its subcellular location is the centromere. The protein resides in the kinetochore. Its function is as follows. Component of the CENPA-HI complex, a centromeric complex involved in assembly of kinetochore proteins, mitotic progression and chromosome segregation. Required for the localization of CENPC but not CENPA to the centromere. It however may be involved in incorporation of newly synthesized CENPA into centromeres via its interaction with the CENPA-NAC complex. The protein is Centromere protein H (CENPH) of Gallus gallus (Chicken).